A 112-amino-acid chain; its full sequence is FK506-binding protein 1 (112 aa).

A compositionally biased stretch (polar residues) spans 1–10 (MSAPATTQVE). The tract at residues 1-20 (MSAPATTQVEILQEGDGKTF) is disordered. Residues 24 to 112 (GDLVTIHYTG…LFDVELLNVN (89 aa)) form the PPIase FKBP-type domain.

This sequence belongs to the FKBP-type PPIase family. FKBP1 subfamily.

It localises to the cytoplasm. The catalysed reaction is [protein]-peptidylproline (omega=180) = [protein]-peptidylproline (omega=0). Its activity is regulated as follows. Inhibited by both FK506 and rapamycin. In terms of biological role, PPIases accelerate the folding of proteins. It catalyzes the cis-trans isomerization of proline imidic peptide bonds in oligopeptides. This is FK506-binding protein 1 (FPR1) from Debaryomyces hansenii (strain ATCC 36239 / CBS 767 / BCRC 21394 / JCM 1990 / NBRC 0083 / IGC 2968) (Yeast).